We begin with the raw amino-acid sequence, 304 residues long: Hairy/enhancer-of-split related with YRPW motif protein 1 (304 aa).

The interval 1–52 (MKRAHPDYSSSDSELDETVEVEKESADENGNLSSALGSMSPTTSSQILARKR) is disordered. Polar residues predominate over residues 28–47 (ENGNLSSALGSMSPTTSSQI). A transcriptional repression and interaction with NCOR1 and SIN3A region spans residues 48-117 (LARKRRRGII…GGKGYFDAHA (70 aa)). The bHLH domain maps to 49 to 104 (ARKRRRGIIEKRRRDRINNSLSELRRLVPSAFEKQGSAKLEKAEILQMTVDHLKML). The Orange domain maps to 122–158 (YRSLGFRECLAEVARYLSIIEGLDASDPLRVRLVSHL). The tract at residues 191-234 (AHPLLLPQSGHGNTGTSASPTDPHHQGRLAAAHPEAPALRAPPS) is disordered. Over residues 200–210 (GHGNTGTSASP) the composition is skewed to polar residues. Positions 218–234 (RLAAAHPEAPALRAPPS) are enriched in low complexity.

Belongs to the HEY family. In terms of assembly, self-associates. Interacts with HES1 and HEYL. Interacts with HDAC1, NCOR1 and SIN3A. Interacts with GATA4 and GATA6. Interacts with CCDC89/BOIP.

The protein resides in the nucleus. Its function is as follows. Transcriptional repressor which binds preferentially to the canonical E box sequence 5'-CACGTG-3'. Downstream effector of Notch signaling required for cardiovascular development. Specifically required for the Notch-induced endocardial epithelial to mesenchymal transition, which is itself criticial for cardiac valve and septum development. May be required in conjunction with HEY2 to specify arterial cell fate or identity. Promotes maintenance of neuronal precursor cells and glial versus neuronal fate specification. Represses transcription by the cardiac transcriptional activators GATA4 and GATA6 and by the neuronal bHLH factors ASCL1/MASH1 and NEUROD4/MATH3. The protein is Hairy/enhancer-of-split related with YRPW motif protein 1 (HEY1) of Canis lupus familiaris (Dog).